We begin with the raw amino-acid sequence, 418 residues long: Bifunctional protein GlmU (418 aa).

Residues 1–236 (MAAVIVLAAG…VWQTEGVNDR (236 aa)) are pyrophosphorylase. Residues 7–10 (LAAG), K21, Q74, 79–80 (GT), 102–104 (YGD), G141, E155, N170, and N234 each bind UDP-N-acetyl-alpha-D-glucosamine. Residue D104 coordinates Mg(2+). Residue N234 participates in Mg(2+) binding. Residues 237–257 (VQLARMNAEVNRRIVTGWMRA) are linker. Residues 258–418 (GVTIIDPTST…DDTLNPEADQ (161 aa)) form an N-acetyltransferase region. UDP-N-acetyl-alpha-D-glucosamine contacts are provided by R339 and K357. Catalysis depends on H369, which acts as the Proton acceptor. Y372 contributes to the UDP-N-acetyl-alpha-D-glucosamine binding site. A386 is an acetyl-CoA binding site.

This sequence in the N-terminal section; belongs to the N-acetylglucosamine-1-phosphate uridyltransferase family. It in the C-terminal section; belongs to the transferase hexapeptide repeat family. In terms of assembly, homotrimer. Mg(2+) is required as a cofactor.

The protein localises to the cytoplasm. It carries out the reaction alpha-D-glucosamine 1-phosphate + acetyl-CoA = N-acetyl-alpha-D-glucosamine 1-phosphate + CoA + H(+). It catalyses the reaction N-acetyl-alpha-D-glucosamine 1-phosphate + UTP + H(+) = UDP-N-acetyl-alpha-D-glucosamine + diphosphate. It participates in nucleotide-sugar biosynthesis; UDP-N-acetyl-alpha-D-glucosamine biosynthesis; N-acetyl-alpha-D-glucosamine 1-phosphate from alpha-D-glucosamine 6-phosphate (route II): step 2/2. Its pathway is nucleotide-sugar biosynthesis; UDP-N-acetyl-alpha-D-glucosamine biosynthesis; UDP-N-acetyl-alpha-D-glucosamine from N-acetyl-alpha-D-glucosamine 1-phosphate: step 1/1. The protein operates within bacterial outer membrane biogenesis; LPS lipid A biosynthesis. In terms of biological role, catalyzes the last two sequential reactions in the de novo biosynthetic pathway for UDP-N-acetylglucosamine (UDP-GlcNAc). The C-terminal domain catalyzes the transfer of acetyl group from acetyl coenzyme A to glucosamine-1-phosphate (GlcN-1-P) to produce N-acetylglucosamine-1-phosphate (GlcNAc-1-P), which is converted into UDP-GlcNAc by the transfer of uridine 5-monophosphate (from uridine 5-triphosphate), a reaction catalyzed by the N-terminal domain. The polypeptide is Bifunctional protein GlmU (Cutibacterium acnes (strain DSM 16379 / KPA171202) (Propionibacterium acnes)).